Reading from the N-terminus, the 115-residue chain is Peptidyl-tRNA hydrolase (115 aa).

The protein belongs to the PTH2 family.

The protein resides in the cytoplasm. It catalyses the reaction an N-acyl-L-alpha-aminoacyl-tRNA + H2O = an N-acyl-L-amino acid + a tRNA + H(+). Its function is as follows. The natural substrate for this enzyme may be peptidyl-tRNAs which drop off the ribosome during protein synthesis. The sequence is that of Peptidyl-tRNA hydrolase from Methanocaldococcus jannaschii (strain ATCC 43067 / DSM 2661 / JAL-1 / JCM 10045 / NBRC 100440) (Methanococcus jannaschii).